We begin with the raw amino-acid sequence, 495 residues long: Prenylcysteine oxidase 1-like (495 aa).

Positions 1-22 are cleaved as a signal peptide; it reads MARAAPLLAVLATVLTTAAAGG. N185 and N343 each carry an N-linked (GlcNAc...) asparagine glycan.

This sequence belongs to the prenylcysteine oxidase family. FAD is required as a cofactor.

The protein resides in the secreted. Its function is as follows. Likely to have oxidoreductase activity. Required in the mevalonate pathway to regulate prenylation and enhances the bactericidal activity of neutrophils. In Mus musculus (Mouse), this protein is Prenylcysteine oxidase 1-like (Pcyox1l).